The sequence spans 513 residues: 2,3-bisphosphoglycerate-independent phosphoglycerate mutase (513 aa).

Positions 13 and 63 each coordinate Mn(2+). The Phosphoserine intermediate role is filled by S63. Substrate contacts are provided by residues H124, 154–155 (RD), R186, R192, 262–265 (RADR), and K335. 5 residues coordinate Mn(2+): D403, H407, D444, H445, and H463.

The protein belongs to the BPG-independent phosphoglycerate mutase family. As to quaternary structure, monomer. Mn(2+) serves as cofactor.

It carries out the reaction (2R)-2-phosphoglycerate = (2R)-3-phosphoglycerate. The protein operates within carbohydrate degradation; glycolysis; pyruvate from D-glyceraldehyde 3-phosphate: step 3/5. Catalyzes the interconversion of 2-phosphoglycerate and 3-phosphoglycerate. The chain is 2,3-bisphosphoglycerate-independent phosphoglycerate mutase from Myxococcus xanthus (strain DK1622).